A 602-amino-acid chain; its full sequence is MFGYLQLINPTTDIYIKDYGNFSGIVAHQAYDPVRRDHMLLRSMKLHFGPNSKLLWLGDFHAITLSHANMIFGASSVGFKGVNVSTLPPDTLTTGIRPRPVVTMDFAQLKGFYSDLAQKEDYIMYFHDMVKFVSQTGGAPVSLRDVFLWISESVTGPVVIRTDCVTGCNNLWPSGSGHFYFPYERKTKFRYGTFVECGKNLTWSEGPQWDVKSYVVGFNFVTRANSLLGGGFDEVCYRLMMQAEVPRQVAEQGLTLEQAVRKLASEHHMSRPQLTSRRVPGITDQTKYEAYVVCGPFRTGQVVADSLQMAEDLAWREMLGTLKTLIHDEARQTKGCCXRCWPGELYLINIESAGFREGASAAAAYQAGFLRAFYGCLNTSVCSFSSLDDGLRWLCTRLSTKSIGAKGRTVVLFGCHSEGEVLADGFGKTYSAAEAREQVALSGKIGGSAQVIVVWQRCRESKLQRLLPELAMVSYVPEEVVAGFKRVRELETYPQWCLWLYRSMIESMGGIDVGVRDASPLTESGVVYQVEAAQYGMRTTRVRRADGTLDYQGLSWTSLLMLLLGHYGADQTYEALRVSSMFIRAREVGWRKRGTFSCIVST.

Its subcellular location is the host cytoplasm. In Callospermophilus lateralis (Golden-mantled ground squirrel), this protein is Non structural protein VP9'.